The primary structure comprises 37 residues: U1-ectatotoxin-Eb1a subunit B (37 aa).

This sequence belongs to the ectatomin family. Ectatomin-Eq subfamily. As to quaternary structure, heterodimer of subunits A and B; disulfide-linked. As to expression, expressed by the venom gland.

Its subcellular location is the secreted. It localises to the target cell membrane. The protein is U1-ectatotoxin-Eb1a subunit B of Ectatomma brunneum (Ant).